Consider the following 125-residue polypeptide: Insulin growth factor-like family member 3 (125 aa).

The first 24 residues, 1 to 24 (MRPRCCILALVCWITVFLLQCSKG), serve as a signal peptide directing secretion.

The protein belongs to the IGFL family. In terms of tissue distribution, detected in the cerebellum.

It is found in the secreted. Functionally, potential ligand of the IGFLR1 cell membrane receptor. In Homo sapiens (Human), this protein is Insulin growth factor-like family member 3 (IGFL3).